Reading from the N-terminus, the 229-residue chain is MNSIELPLLDRTAQNSVISTTLNDFSNWSRLSSLWPLLYGTSCCFIEFASLIGSRFDFDRYGLVPRSSPRQADLILTAGTVTMKMAPSLVRLYEQMPEPKYVIAMGACTITGGMFSTDSYSTVRGVDKLIPVDVYLPGCPPKPEAVIDAITKLRKKISREIYEDRIRPQRQRSNRCFTTNHKFHISRSMNTGNYDQGFLYQPASTFTSEIPTETFFKYKSSVSSHELVN.

[4Fe-4S] cluster contacts are provided by Cys43, Cys44, Cys108, and Cys139.

The protein belongs to the complex I 20 kDa subunit family. NDH is composed of at least 16 different subunits, 5 of which are encoded in the nucleus. [4Fe-4S] cluster serves as cofactor.

It localises to the plastid. It is found in the chloroplast thylakoid membrane. It catalyses the reaction a plastoquinone + NADH + (n+1) H(+)(in) = a plastoquinol + NAD(+) + n H(+)(out). The enzyme catalyses a plastoquinone + NADPH + (n+1) H(+)(in) = a plastoquinol + NADP(+) + n H(+)(out). In terms of biological role, NDH shuttles electrons from NAD(P)H:plastoquinone, via FMN and iron-sulfur (Fe-S) centers, to quinones in the photosynthetic chain and possibly in a chloroplast respiratory chain. The immediate electron acceptor for the enzyme in this species is believed to be plastoquinone. Couples the redox reaction to proton translocation, and thus conserves the redox energy in a proton gradient. The polypeptide is NAD(P)H-quinone oxidoreductase subunit K, chloroplastic (Coffea arabica (Arabian coffee)).